The chain runs to 90 residues: Small ribosomal subunit protein bS20 (90 aa).

Residues 1 to 11 show a composition bias toward basic and acidic residues; that stretch reads MANIKSSEKDI. Disordered stretches follow at residues 1–29 and 69–90; these read MANIKSSEKDIRRTKRRNAANSQNRSRLR and SKNADRKKSRMAKRLNAVSAAA.

It belongs to the bacterial ribosomal protein bS20 family.

Functionally, binds directly to 16S ribosomal RNA. This chain is Small ribosomal subunit protein bS20, found in Leptospira borgpetersenii serovar Hardjo-bovis (strain L550).